The primary structure comprises 54 residues: UPF0391 membrane protein Mfla_0947/Mfla_1091 (54 aa).

2 helical membrane passes run 6 to 26 (VIFF…IAAG) and 30 to 50 (IAKI…VAGI).

Belongs to the UPF0391 family.

Its subcellular location is the cell membrane. The polypeptide is UPF0391 membrane protein Mfla_0947/Mfla_1091 (Methylobacillus flagellatus (strain ATCC 51484 / DSM 6875 / VKM B-1610 / KT)).